The primary structure comprises 674 residues: UvrABC system protein C (674 aa).

In terms of domain architecture, GIY-YIG spans 64 to 142; it reads NGPGVYRMLN…IKRLRPRFNV (79 aa). The UVR domain maps to 252-287; that stretch reads QAVKATIASAMAEASENLDFERAALYRDRLAALSHV.

Belongs to the UvrC family. As to quaternary structure, interacts with UvrB in an incision complex.

It localises to the cytoplasm. The UvrABC repair system catalyzes the recognition and processing of DNA lesions. UvrC both incises the 5' and 3' sides of the lesion. The N-terminal half is responsible for the 3' incision and the C-terminal half is responsible for the 5' incision. The chain is UvrABC system protein C from Rhizobium meliloti (strain 1021) (Ensifer meliloti).